Reading from the N-terminus, the 134-residue chain is Replication enhancer protein (134 aa).

It belongs to the geminiviridae replication enhancer protein family. As to quaternary structure, homooligomer. Interacts with the replication-associated protein (REP). Interacts with host proliferating cell nuclear antigen (PCNA). Interacts with host retinoblastoma-related protein 1 (RBR1), and may thereby deregulate the host cell cycle. Oligomerization and interaction with PCNA are necessary for optimal replication enhancement.

Its function is as follows. Increases viral DNA accumulation. Enhances infectivity and symptom expression. This is Replication enhancer protein from Cynanchum acutum (Little mallow).